The following is a 142-amino-acid chain: MPSAEVLQETPRVVISVGKKKTAVARAIIKPGIGRVRINGYPLELWPIEMARIKMSEPLILAGELAKKVDIDVNVSGGGYMGQAVAVRIAMARGLVAFFQSQELKELYERYDPYMLKGDPRRTEHKKPGIKHARSKRQKAYR.

The interval 117 to 142 is disordered; sequence KGDPRRTEHKKPGIKHARSKRQKAYR. Residues 123 to 142 show a composition bias toward basic residues; it reads TEHKKPGIKHARSKRQKAYR.

Belongs to the universal ribosomal protein uS9 family.

The sequence is that of Small ribosomal subunit protein uS9 from Pyrobaculum aerophilum (strain ATCC 51768 / DSM 7523 / JCM 9630 / CIP 104966 / NBRC 100827 / IM2).